The following is a 154-amino-acid chain: Protein X (154 aa).

The interval proline 68–phenylalanine 117 is mitochondrial targeting sequence.

Belongs to the orthohepadnavirus protein X family. As to quaternary structure, may form homodimer. May interact with host CEBPA, CFLAR, CREB1, DDB1, E4F1, HBXIP, HSPD1/HSP60, NFKBIA, POLR2E and SMAD4. Interacts with host SMC5-SMC6 complex and induces its degradation. Interacts with host TRPC4AP; leading to prevent ubiquitination of TRPC4AP. Interacts with host PLSCR1; this interaction promotes ubiquitination and degradation of HBx and impairs HBx-mediated cell proliferation. Post-translationally, a fraction may be phosphorylated in insect cells and HepG2 cells, a human hepatoblastoma cell line. Phosphorylated in vitro by host protein kinase C or mitogen-activated protein kinase. N-acetylated in insect cells.

The protein resides in the host cytoplasm. The protein localises to the host nucleus. Its subcellular location is the host mitochondrion. Its function is as follows. Multifunctional protein that plays a role in silencing host antiviral defenses and promoting viral transcription. Does not seem to be essential for HBV infection. May be directly involved in development of cirrhosis and liver cancer (hepatocellular carcinoma). Most of cytosolic activities involve modulation of cytosolic calcium. The effect on apoptosis is controversial depending on the cell types in which the studies have been conducted. May induce apoptosis by localizing in mitochondria and causing loss of mitochondrial membrane potential. May also modulate apoptosis by binding host CFLAR, a key regulator of the death-inducing signaling complex (DISC). Promotes viral transcription by using the host E3 ubiquitin ligase DDB1 to target the SMC5-SMC6 complex to proteasomal degradation. This host complex would otherwise bind to viral episomal DNA, and prevents its transcription. Moderately stimulates transcription of many different viral and cellular transcription elements. Promoters and enhancers stimulated by HBx contain DNA binding sites for NF-kappa-B, AP-1, AP-2, c-EBP, ATF/CREB, or the calcium-activated factor NF-AT. The sequence is that of Protein X from Homo sapiens (Human).